Here is a 553-residue protein sequence, read N- to C-terminus: Dihydroxy-acid dehydratase (553 aa).

D78 provides a ligand contact to Mg(2+). C119 serves as a coordination point for [2Fe-2S] cluster. Residues D120 and K121 each coordinate Mg(2+). An N6-carboxylysine modification is found at K121. C191 contacts [2Fe-2S] cluster. E444 is a binding site for Mg(2+). S470 functions as the Proton acceptor in the catalytic mechanism.

This sequence belongs to the IlvD/Edd family. As to quaternary structure, homodimer. The cofactor is [2Fe-2S] cluster. It depends on Mg(2+) as a cofactor.

The enzyme catalyses (2R)-2,3-dihydroxy-3-methylbutanoate = 3-methyl-2-oxobutanoate + H2O. It carries out the reaction (2R,3R)-2,3-dihydroxy-3-methylpentanoate = (S)-3-methyl-2-oxopentanoate + H2O. It participates in amino-acid biosynthesis; L-isoleucine biosynthesis; L-isoleucine from 2-oxobutanoate: step 3/4. The protein operates within amino-acid biosynthesis; L-valine biosynthesis; L-valine from pyruvate: step 3/4. Its function is as follows. Functions in the biosynthesis of branched-chain amino acids. Catalyzes the dehydration of (2R,3R)-2,3-dihydroxy-3-methylpentanoate (2,3-dihydroxy-3-methylvalerate) into 2-oxo-3-methylpentanoate (2-oxo-3-methylvalerate) and of (2R)-2,3-dihydroxy-3-methylbutanoate (2,3-dihydroxyisovalerate) into 2-oxo-3-methylbutanoate (2-oxoisovalerate), the penultimate precursor to L-isoleucine and L-valine, respectively. The chain is Dihydroxy-acid dehydratase from Methanococcoides burtonii (strain DSM 6242 / NBRC 107633 / OCM 468 / ACE-M).